We begin with the raw amino-acid sequence, 178 residues long: Large ribosomal subunit protein uL16 (178 aa).

Belongs to the universal ribosomal protein uL16 family.

The polypeptide is Large ribosomal subunit protein uL16 (Saccharolobus solfataricus (strain ATCC 35092 / DSM 1617 / JCM 11322 / P2) (Sulfolobus solfataricus)).